A 793-amino-acid polypeptide reads, in one-letter code: DnaJ homolog subfamily C member 10 (793 aa).

The first 32 residues, 1-32 (MGVWLNRDEFIRDVKRISLCLLVLYVVIVVGT), serve as a signal peptide directing secretion. One can recognise a J domain in the interval 35–100 (NFYSLLGVSK…DLRKKYDKYG (66 aa)). A Thioredoxin 1 domain is found at 130-232 (EIITLERREF…ESLVSFAMQH (103 aa)). Residues Cys158 and Cys161 are joined by a disulfide bond. Trxb stretches follow at residues 235–350 (TTVT…LPDF) and 348–463 (PDFE…PQNF). Thioredoxin domains are found at residues 454–553 (HVTT…IEDL), 557–665 (SVVS…SWGL), and 671–776 (ASID…ALIY). Cys480 and Cys483 are joined by a disulfide. A glycan (N-linked (GlcNAc...) asparagine) is linked at Asn530. Cystine bridges form between Cys588–Cys591 and Cys700–Cys703. The Prevents secretion from ER motif lies at 790–793 (KDEL).

In terms of assembly, interacts with HSPA5 (via its J domain). Interacts with EDEM1.

The protein localises to the endoplasmic reticulum lumen. Functionally, endoplasmic reticulum disulfide reductase involved both in the correct folding of proteins and degradation of misfolded proteins. Required for efficient folding of proteins in the endoplasmic reticulum by catalyzing the removal of non-native disulfide bonds formed during the folding of proteins, such as LDLR. Also involved in endoplasmic reticulum-associated degradation (ERAD) by reducing incorrect disulfide bonds in misfolded glycoproteins recognized by EDEM1. Interaction with HSPA5 is required its activity, not for the disulfide reductase activity, but to facilitate the release of DNAJC10 from its substrate. Promotes apoptotic signaling pathway in response to endoplasmic reticulum stress. The protein is DnaJ homolog subfamily C member 10 (Dnajc10) of Rattus norvegicus (Rat).